Reading from the N-terminus, the 392-residue chain is CD2 homolog (392 aa).

A signal peptide spans 1–16 (MIIKLIFLICFKIVLS). At 17–222 (IDNKTKFNET…YLDFFQVTSY (206 aa)) the chain is on the extracellular side. N-linked (GlcNAc...) asparagine; by host glycosylation is found at N39, N88, N92, N106, N148, N159, N183, N191, N198, and N204. 2 disulfide bridges follow: C137/C205 and C144/C188. A helical membrane pass occupies residues 223–243 (IFYMIIFIVTGITVSILISII). Residues 244–392 (TFLFIRKRKH…ISLIHVDRII (149 aa)) lie on the Cytoplasmic side of the membrane. Positions 258 to 290 (ESPPPESNEEEQQCHHDTTSIHEPSPREPLLPK) are disordered. Residues 269–283 (QQCHHDTTSIHEPSP) are compositionally biased toward basic and acidic residues. Repeat copies occupy residues 319 to 324 (KPCPPP), 325 to 330 (KPCPPP), 331 to 336 (KPCPPP), 337 to 342 (KPCPPS), and 343 to 348 (KPCPPP). The tract at residues 319–348 (KPCPPPKPCPPPKPCPPPKPCPPSKPCPPP) is 5 X 6 AA tandem repeats of K-P-C-[PRS]-[P]-[PS]. The segment at 328 to 357 (PPPKPCPPPKPCPPSKPCPPPEPYSPPKPC) is disordered.

The protein belongs to the asfivirus CD2 homolog protein family. In terms of assembly, both glycosylated and nonglycosylated forms interact (via C-terminus) with the host AP-1 complex. Cleaved into two fragments of 63 kDa and 26 kDa containing respectively the glycosylated N-terminus and the nonglycosylated C-terminus. A full-length 89-kDa glycosylated form also exists.

It localises to the host cell membrane. The protein resides in the virion membrane. The protein localises to the host Golgi apparatus. May play an immunosuppressive role by inhibiting lymphocyte proliferation and subsequently facilitating viral replication and generalization of infection. Responsible for viral hemadsorption, which may help viral spread. Increases virus replication in the tick vector at the step of virus uptake or replication in the tick gut. May play a role in the host Golgi reorganization to yield viral factories. May play a role in host cell penetration. The polypeptide is CD2 homolog (Ornithodoros (relapsing fever ticks)).